A 471-amino-acid chain; its full sequence is 3-isopropylmalate dehydratase large subunit (471 aa).

[4Fe-4S] cluster-binding residues include Cys347, Cys407, and Cys410.

Belongs to the aconitase/IPM isomerase family. LeuC type 1 subfamily. Heterodimer of LeuC and LeuD. [4Fe-4S] cluster is required as a cofactor.

It carries out the reaction (2R,3S)-3-isopropylmalate = (2S)-2-isopropylmalate. It functions in the pathway amino-acid biosynthesis; L-leucine biosynthesis; L-leucine from 3-methyl-2-oxobutanoate: step 2/4. Its function is as follows. Catalyzes the isomerization between 2-isopropylmalate and 3-isopropylmalate, via the formation of 2-isopropylmaleate. The chain is 3-isopropylmalate dehydratase large subunit from Vibrio parahaemolyticus serotype O3:K6 (strain RIMD 2210633).